Reading from the N-terminus, the 531-residue chain is RNA-binding protein RO60 (531 aa).

Positions V24–T360 constitute a TROVE domain. The RNA-binding stretch occupies residues R128–N274. The interval F352–V531 is VWFA-like domain. Residues S369, S371, and T438 each contribute to the a divalent metal cation site.

This sequence belongs to the Ro 60 kDa family. Forms oligomers upon binding DrY RNA, The multimers are of an average size of 700 kDa and are composed of around 12 molecules of Rsr-DrY RNA.

It localises to the cytoplasm. Binds to several small RNAs that accumulate during recovery from UV irradiation. Contributes to the resistance of D.radiodurans to ultraviolet irradiation. This Deinococcus radiodurans (strain ATCC 13939 / DSM 20539 / JCM 16871 / CCUG 27074 / LMG 4051 / NBRC 15346 / NCIMB 9279 / VKM B-1422 / R1) protein is RNA-binding protein RO60.